The following is a 282-amino-acid chain: Undecaprenyl-diphosphatase (282 aa).

5 helical membrane passes run 90-110, 121-141, 194-214, 228-248, and 256-276; these read YRLG…GLFF, LWVV…AEYV, FGFL…LPDA, QLLV…AWLL, and MYWF…LLAT.

The protein belongs to the UppP family.

The protein resides in the cell membrane. It catalyses the reaction di-trans,octa-cis-undecaprenyl diphosphate + H2O = di-trans,octa-cis-undecaprenyl phosphate + phosphate + H(+). Catalyzes the dephosphorylation of undecaprenyl diphosphate (UPP). Confers resistance to bacitracin. This chain is Undecaprenyl-diphosphatase, found in Mycobacterium tuberculosis (strain ATCC 25618 / H37Rv).